The following is a 70-amino-acid chain: Conotoxin Lt3.4 (70 aa).

An N-terminal signal peptide occupies residues 1 to 24 (MLKMGVLLFTFLVLFPLAMFQLDA). A propeptide spanning residues 25–54 (DQPVERYAENKQDLNRDERMKIMLSALRQR) is cleaved from the precursor. Residue Q55 is modified to Pyrrolidone carboxylic acid. Disulfide bonds link C56–C68, C57–C66, and C62–C69.

It belongs to the conotoxin M superfamily. Expressed by the venom duct.

Its subcellular location is the secreted. This is Conotoxin Lt3.4 from Conus litteratus (Lettered cone).